The following is a 22-amino-acid chain: MVPVPVHHMADELLRNGPDTVI.

This chain is Brain peptide MVPVPVHHMADELLRNGPDTVI, found in Apis mellifera (Honeybee).